A 342-amino-acid polypeptide reads, in one-letter code: Glycerol-3-phosphate dehydrogenase [NAD(P)+] (342 aa).

Residues Ser-13, Trp-14, and Lys-108 each coordinate NADPH. Sn-glycerol 3-phosphate is bound by residues Lys-108, Gly-139, and Ser-141. Residue Ala-143 coordinates NADPH. Sn-glycerol 3-phosphate-binding residues include Lys-194, Asp-247, Ser-257, Arg-258, and Asn-259. Lys-194 acts as the Proton acceptor in catalysis. Arg-258 lines the NADPH pocket. Residues Val-282 and Glu-284 each contribute to the NADPH site.

The protein belongs to the NAD-dependent glycerol-3-phosphate dehydrogenase family.

The protein localises to the cytoplasm. The enzyme catalyses sn-glycerol 3-phosphate + NAD(+) = dihydroxyacetone phosphate + NADH + H(+). The catalysed reaction is sn-glycerol 3-phosphate + NADP(+) = dihydroxyacetone phosphate + NADPH + H(+). Its pathway is membrane lipid metabolism; glycerophospholipid metabolism. In terms of biological role, catalyzes the reduction of the glycolytic intermediate dihydroxyacetone phosphate (DHAP) to sn-glycerol 3-phosphate (G3P), the key precursor for phospholipid synthesis. This chain is Glycerol-3-phosphate dehydrogenase [NAD(P)+], found in Lactococcus lactis subsp. cremoris (strain MG1363).